The chain runs to 122 residues: Large ribosomal subunit protein bL20 (122 aa).

The protein belongs to the bacterial ribosomal protein bL20 family.

Binds directly to 23S ribosomal RNA and is necessary for the in vitro assembly process of the 50S ribosomal subunit. It is not involved in the protein synthesizing functions of that subunit. The chain is Large ribosomal subunit protein bL20 (rplT) from Treponema pallidum (strain Nichols).